Here is a 652-residue protein sequence, read N- to C-terminus: RNA-binding E3 ubiquitin-protein ligase MEX3C (652 aa).

Disordered stretches follow at residues 15–39 (AAPA…ELEG) and 80–136 (QARR…EDRP). Residues 18–33 (APLPQPPPLPPPPPAG) are compositionally biased toward pro residues. Over residues 101 to 134 (AELELEVDEEEGEEAELDGELLEEEELEEAEEED) the composition is skewed to acidic residues. KH domains follow at residues 225–286 (TTEC…KREI) and 319–380 (QTTV…REEI). Disordered stretches follow at residues 429 to 448 (ARMM…SGST) and 506 to 566 (FEPV…HVGL). The span at 430–448 (RMMSNYRNDSSSSLGSGST) shows a compositional bias: low complexity. Polar residues predominate over residues 519-537 (PSGNMKTQRRGSQPSTPRL). Ser530 and Ser538 each carry phosphoserine. Over residues 544-555 (SIEHPLARRVRS) the composition is skewed to basic and acidic residues. The segment at 601-641 (CVICFENEVIAALVPCGHNLFCMECANKICEKRTPSCPVCQ) adopts an RING-type zinc-finger fold.

Interacts with USP7, which antagonizes the ability to degrade mRNA. Phosphorylated.

It is found in the nucleus. The protein resides in the cytoplasm. It catalyses the reaction S-ubiquitinyl-[E2 ubiquitin-conjugating enzyme]-L-cysteine + [acceptor protein]-L-lysine = [E2 ubiquitin-conjugating enzyme]-L-cysteine + N(6)-ubiquitinyl-[acceptor protein]-L-lysine.. RNA-binding protein. May be involved in post-transcriptional regulatory mechanisms, modulating levels of some mRNAs by promoting their degradation in a way involving ubiquitin ligase activity. May act as suppressor of replication stress and chromosome missegregation. This is RNA-binding E3 ubiquitin-protein ligase MEX3C (Mex3c) from Mus musculus (Mouse).